Consider the following 270-residue polypeptide: Putative phosphoenolpyruvate synthase regulatory protein (270 aa).

150–157 is a binding site for ADP; sequence GVSRCGKT.

The protein belongs to the pyruvate, phosphate/water dikinase regulatory protein family. PSRP subfamily.

It catalyses the reaction [pyruvate, water dikinase] + ADP = [pyruvate, water dikinase]-phosphate + AMP + H(+). The catalysed reaction is [pyruvate, water dikinase]-phosphate + phosphate + H(+) = [pyruvate, water dikinase] + diphosphate. Bifunctional serine/threonine kinase and phosphorylase involved in the regulation of the phosphoenolpyruvate synthase (PEPS) by catalyzing its phosphorylation/dephosphorylation. This chain is Putative phosphoenolpyruvate synthase regulatory protein, found in Shewanella sediminis (strain HAW-EB3).